The primary structure comprises 407 residues: Probable peptidoglycan glycosyltransferase FtsW (407 aa).

Topologically, residues 1–25 (MSIDFRNIIKPYPSPIITGRGIDLD) are cytoplasmic. The helical transmembrane segment at 26 to 46 (FPMLAGCLALLGLGLVMITSA) threads the bilayer. The Periplasmic segment spans residues 47 to 65 (SSEVAAVQSGNTLYMMIRH). A helical membrane pass occupies residues 66–86 (LVYLVIGLGACIVTMMIPIAT). At 87-89 (WQR) the chain is on the cytoplasmic side. The helical transmembrane segment at 90–110 (LGWLMLIGAFGLLIMVILPGI) threads the bilayer. Topologically, residues 111–119 (GREVNGSMR) are periplasmic. A helical membrane pass occupies residues 120 to 140 (WIGFGAFNVQPSEIAKVFVVI). The Cytoplasmic portion of the chain corresponds to 141-155 (YLAGYLVRRQKEVRE). A helical membrane pass occupies residues 156 to 176 (SWMGFFKPFIVLLPMAGLLLM). Residues 177–181 (EPDFG) lie on the Periplasmic side of the membrane. A helical transmembrane segment spans residues 182–202 (ATVVMMGAAAAMLFLGGVGLF). Position 203 (Arg203) is a topological domain, cytoplasmic. The chain crosses the membrane as a helical span at residues 204-224 (FTLMVVLAVAAVTVLVQAQPY). At 225–283 (RMARLITFTDPWSDQFGSGYQLTQALIAFGRGEWLGVGLGNSVQKQFYLPEAHTDFVFS) the chain is on the periplasmic side. Residues 284–304 (VLAEELGVVGSLCTVALFVFV) traverse the membrane as a helical segment. Topologically, residues 305–321 (CVRGMYIGMWAEKAKQY) are cytoplasmic. A helical membrane pass occupies residues 322–342 (FAAYVAYGLSFLWIGQFLINI). Topologically, residues 343 to 355 (GVNVGLLPTKGLT) are periplasmic. Residues 356 to 376 (LPFLSYGGSSLVICCACLGLL) form a helical membrane-spanning segment. At 377-407 (LRIEWESRTHLGSEEMEFSESDFAEEPTHGR) the chain is on the cytoplasmic side.

The protein belongs to the SEDS family. FtsW subfamily.

It localises to the cell inner membrane. The enzyme catalyses [GlcNAc-(1-&gt;4)-Mur2Ac(oyl-L-Ala-gamma-D-Glu-L-Lys-D-Ala-D-Ala)](n)-di-trans,octa-cis-undecaprenyl diphosphate + beta-D-GlcNAc-(1-&gt;4)-Mur2Ac(oyl-L-Ala-gamma-D-Glu-L-Lys-D-Ala-D-Ala)-di-trans,octa-cis-undecaprenyl diphosphate = [GlcNAc-(1-&gt;4)-Mur2Ac(oyl-L-Ala-gamma-D-Glu-L-Lys-D-Ala-D-Ala)](n+1)-di-trans,octa-cis-undecaprenyl diphosphate + di-trans,octa-cis-undecaprenyl diphosphate + H(+). It functions in the pathway cell wall biogenesis; peptidoglycan biosynthesis. Peptidoglycan polymerase that is essential for cell division. The polypeptide is Probable peptidoglycan glycosyltransferase FtsW (Pseudomonas fluorescens (strain SBW25)).